A 351-amino-acid chain; its full sequence is Phenylalanine--tRNA ligase alpha subunit (351 aa).

Glu276 provides a ligand contact to Mg(2+).

Belongs to the class-II aminoacyl-tRNA synthetase family. Phe-tRNA synthetase alpha subunit type 1 subfamily. As to quaternary structure, tetramer of two alpha and two beta subunits. It depends on Mg(2+) as a cofactor.

The protein localises to the cytoplasm. It carries out the reaction tRNA(Phe) + L-phenylalanine + ATP = L-phenylalanyl-tRNA(Phe) + AMP + diphosphate + H(+). The polypeptide is Phenylalanine--tRNA ligase alpha subunit (Psychrobacter arcticus (strain DSM 17307 / VKM B-2377 / 273-4)).